A 285-amino-acid chain; its full sequence is uncharacterized protein (285 aa).

Ser168 lines the substrate pocket. Tyr181 (proton acceptor) is an active-site residue.

Belongs to the short-chain dehydrogenases/reductases (SDR) family.

This is an uncharacterized protein from Haemophilus influenzae (strain ATCC 51907 / DSM 11121 / KW20 / Rd).